Consider the following 340-residue polypeptide: Ketol-acid reductoisomerase (NADP(+)) (340 aa).

Positions 1-183 constitute a KARI N-terminal Rossmann domain; it reads MAITVYYDKD…GGGRTGIIET (183 aa). NADP(+) is bound by residues 26–29, arginine 49, serine 52, serine 54, and 84–87; these read FGSQ and DEIQ. Histidine 109 is a catalytic residue. Glycine 135 contacts NADP(+). Residues 184 to 329 form the KARI C-terminal knotted domain; sequence TFKAETETDL…RNLRAMMPWI (146 aa). Residues aspartate 192, glutamate 196, glutamate 228, and glutamate 232 each coordinate Mg(2+). Serine 253 contacts substrate.

The protein belongs to the ketol-acid reductoisomerase family. Mg(2+) is required as a cofactor.

It catalyses the reaction (2R)-2,3-dihydroxy-3-methylbutanoate + NADP(+) = (2S)-2-acetolactate + NADPH + H(+). It carries out the reaction (2R,3R)-2,3-dihydroxy-3-methylpentanoate + NADP(+) = (S)-2-ethyl-2-hydroxy-3-oxobutanoate + NADPH + H(+). Its pathway is amino-acid biosynthesis; L-isoleucine biosynthesis; L-isoleucine from 2-oxobutanoate: step 2/4. The protein operates within amino-acid biosynthesis; L-valine biosynthesis; L-valine from pyruvate: step 2/4. In terms of biological role, involved in the biosynthesis of branched-chain amino acids (BCAA). Catalyzes an alkyl-migration followed by a ketol-acid reduction of (S)-2-acetolactate (S2AL) to yield (R)-2,3-dihydroxy-isovalerate. In the isomerase reaction, S2AL is rearranged via a Mg-dependent methyl migration to produce 3-hydroxy-3-methyl-2-ketobutyrate (HMKB). In the reductase reaction, this 2-ketoacid undergoes a metal-dependent reduction by NADPH to yield (R)-2,3-dihydroxy-isovalerate. The protein is Ketol-acid reductoisomerase (NADP(+)) of Campylobacter jejuni subsp. jejuni serotype O:23/36 (strain 81-176).